Here is a 476-residue protein sequence, read N- to C-terminus: UDP-N-acetylmuramate--L-alanine ligase (476 aa).

123–129 (GTHGKTT) lines the ATP pocket.

The protein belongs to the MurCDEF family.

It localises to the cytoplasm. It carries out the reaction UDP-N-acetyl-alpha-D-muramate + L-alanine + ATP = UDP-N-acetyl-alpha-D-muramoyl-L-alanine + ADP + phosphate + H(+). Its pathway is cell wall biogenesis; peptidoglycan biosynthesis. Its function is as follows. Cell wall formation. This Nitrosococcus oceani (strain ATCC 19707 / BCRC 17464 / JCM 30415 / NCIMB 11848 / C-107) protein is UDP-N-acetylmuramate--L-alanine ligase.